The primary structure comprises 524 residues: Bifunctional purine biosynthesis protein PurH (524 aa).

The region spanning 1-144 is the MGS-like domain; it reads MTRRALVSVS…KNSAHVGVVV (144 aa).

Belongs to the PurH family.

The enzyme catalyses (6R)-10-formyltetrahydrofolate + 5-amino-1-(5-phospho-beta-D-ribosyl)imidazole-4-carboxamide = 5-formamido-1-(5-phospho-D-ribosyl)imidazole-4-carboxamide + (6S)-5,6,7,8-tetrahydrofolate. It carries out the reaction IMP + H2O = 5-formamido-1-(5-phospho-D-ribosyl)imidazole-4-carboxamide. It functions in the pathway purine metabolism; IMP biosynthesis via de novo pathway; 5-formamido-1-(5-phospho-D-ribosyl)imidazole-4-carboxamide from 5-amino-1-(5-phospho-D-ribosyl)imidazole-4-carboxamide (10-formyl THF route): step 1/1. It participates in purine metabolism; IMP biosynthesis via de novo pathway; IMP from 5-formamido-1-(5-phospho-D-ribosyl)imidazole-4-carboxamide: step 1/1. The sequence is that of Bifunctional purine biosynthesis protein PurH from Anaeromyxobacter dehalogenans (strain 2CP-C).